We begin with the raw amino-acid sequence, 519 residues long: Serine/threonine-protein kinase RIO3 (519 aa).

Phosphoserine is present on residues Ser8 and Ser112. The tract at residues 121-159 (PYEDSDSSEDEVDWQDTRDDPYRPAKPVPTPKKGFIGKG) is disordered. Phosphotyrosine is present on Tyr122. Over residues 124 to 134 (DSDSSEDEVDW) the composition is skewed to acidic residues. Ser125, Ser127, and Ser128 each carry phosphoserine. The Protein kinase domain maps to 251 to 519 (ETITGCISTG…DGDPPLLYDE (269 aa)). ATP-binding positions include 257–265 (ISTGKESVV) and Lys290. Residue Asp406 is the Proton acceptor of the active site.

It belongs to the protein kinase superfamily. RIO-type Ser/Thr kinase family. Interacts with CASP10. Interacts with IRF3; RIOK3 probably mediates the interaction of TBK1 with IRF3. Associated with 40S pre-ribosomal particles. Mg(2+) serves as cofactor. Autophosphorylated (in vitro). As to expression, widely expressed.

It localises to the cytoplasm. The catalysed reaction is L-seryl-[protein] + ATP = O-phospho-L-seryl-[protein] + ADP + H(+). It catalyses the reaction L-threonyl-[protein] + ATP = O-phospho-L-threonyl-[protein] + ADP + H(+). Its function is as follows. Involved in regulation of type I interferon (IFN)-dependent immune response which plays a critical role in the innate immune response against DNA and RNA viruses. May act as an adapter protein essential for the recruitment of TBK1 to IRF3. Phosphorylates IFIH1 on 'Ser-828' interfering with IFIH1 filament assembly on long dsRNA and resulting in attenuated IFIH1-signaling. Can inhibit CASP10 isoform 7-mediated activation of the NF-kappaB signaling pathway. May play a role in the biogenesis of the 40S ribosomal subunit. Involved in the processing of 21S pre-rRNA to the mature 18S rRNA. This is Serine/threonine-protein kinase RIO3 (RIOK3) from Homo sapiens (Human).